Here is a 173-residue protein sequence, read N- to C-terminus: ATP-dependent protease subunit HslV (173 aa).

Thr-2 is a catalytic residue. Gly-158, Asp-161, and Thr-164 together coordinate Na(+).

It belongs to the peptidase T1B family. HslV subfamily. A double ring-shaped homohexamer of HslV is capped on each side by a ring-shaped HslU homohexamer. The assembly of the HslU/HslV complex is dependent on binding of ATP.

It is found in the cytoplasm. The catalysed reaction is ATP-dependent cleavage of peptide bonds with broad specificity.. Its activity is regulated as follows. Allosterically activated by HslU binding. Its function is as follows. Protease subunit of a proteasome-like degradation complex believed to be a general protein degrading machinery. The sequence is that of ATP-dependent protease subunit HslV from Mannheimia succiniciproducens (strain KCTC 0769BP / MBEL55E).